A 307-amino-acid polypeptide reads, in one-letter code: tRNA pseudouridine synthase B (307 aa).

Aspartate 38 functions as the Nucleophile in the catalytic mechanism.

Belongs to the pseudouridine synthase TruB family. Type 1 subfamily.

The enzyme catalyses uridine(55) in tRNA = pseudouridine(55) in tRNA. Responsible for synthesis of pseudouridine from uracil-55 in the psi GC loop of transfer RNAs. In Bacillus thuringiensis (strain Al Hakam), this protein is tRNA pseudouridine synthase B.